A 718-amino-acid chain; its full sequence is Polyribonucleotide nucleotidyltransferase (718 aa).

Mg(2+)-binding residues include aspartate 487 and aspartate 493. The region spanning 554–613 (PRIETFKIPTDKIREVIGTGGKVIREIVEKTGAKVNIEDDGTVKVASSDGESIKAAIKWI) is the KH domain. The S1 motif domain occupies 623–691 (GEIYEGTVVK…DRGKTRLSMR (69 aa)). The interval 694–718 (DQETGEDLEAKQKAEGEAPAQATGE) is disordered.

It belongs to the polyribonucleotide nucleotidyltransferase family. Mg(2+) serves as cofactor.

The protein localises to the cytoplasm. It catalyses the reaction RNA(n+1) + phosphate = RNA(n) + a ribonucleoside 5'-diphosphate. In terms of biological role, involved in mRNA degradation. Catalyzes the phosphorolysis of single-stranded polyribonucleotides processively in the 3'- to 5'-direction. This is Polyribonucleotide nucleotidyltransferase from Rhodopseudomonas palustris (strain HaA2).